We begin with the raw amino-acid sequence, 139 residues long: Acidic phospholipase A2 DE-I (139 aa).

An N-terminal signal peptide occupies residues 1 to 16 (MRTLWIMAVLLLGVEG). 7 disulfide bridges follow: C42/C132, C44/C60, C59/C111, C65/C139, C66/C104, C73/C97, and C91/C102. Ca(2+) contacts are provided by Y43, G45, and G47. H63 is a catalytic residue. Residue D64 coordinates Ca(2+). D105 is a catalytic residue.

It depends on Ca(2+) as a cofactor. As to expression, expressed by the venom gland.

Its subcellular location is the secreted. The catalysed reaction is a 1,2-diacyl-sn-glycero-3-phosphocholine + H2O = a 1-acyl-sn-glycero-3-phosphocholine + a fatty acid + H(+). In terms of biological role, snake venom phospholipase A2 (PLA2) that inhibits the ADP- and collagen-induced human platelet aggregation. Exhibits high hydrolytic activities and preferred the anionic micelles to the zwitterionic micelles. PLA2 catalyzes the calcium-dependent hydrolysis of the 2-acyl groups in 3-sn-phosphoglycerides. The polypeptide is Acidic phospholipase A2 DE-I (Ovophis okinavensis (Ryukyu Island pit viper)).